A 1344-amino-acid chain; its full sequence is Eukaryotic translation initiation factor 3 subunit A (1344 aa).

K68 carries the N6-acetyllysine modification. Residues 82–120 (NIKSLEDVVRAYLKLAEEKTEAAKEESQQMVLDIEDLDN) adopt a coiled-coil conformation. Residues 315–498 (MQRMSTRVLL…RTLSFGSDLN (184 aa)) enclose the PCI domain. Phosphoserine is present on residues S492 and S584. Positions 664 to 835 (LDPDFIMAKQ…REERERAERA (172 aa)) are interaction with EIF3B. Disordered regions lie at residues 807-844 (YREK…LREY), 866-1240 (EERE…DRDD), and 1252-1344 (DLRD…TVRR). Composition is skewed to basic and acidic residues over residues 866 to 1126 (EERE…DDAR), 1138 to 1240 (GWRE…DRDD), 1252 to 1292 (DLRD…DPPR), and 1300 to 1333 (SRDR…TKNE). At S895 the chain carries Phosphoserine. A 1; truncated repeat occupies 924–931 (DDERPHRR). Residues 924–1133 (DDERPHRRDE…DARPGPWRPF (210 aa)) form a 21 X 10 AA approximate tandem repeats of [DA]-[DE]-[ED]-R-[PLIGFSV]-[RPS]-[RW]-[RL]-[GNIHT]-[DGLPTAM] region. Repeat unit 2 spans residues 932 to 941 (DEDRLRRLGG). One copy of the 3; approximate repeat lies at 942–951 (DDEERESSLR). At S949 the chain carries Phosphoserine. Tandem repeats lie at residues 953–962 (DDDRIPRRGL), 963–972 (DDDRGPRRGP), 973–982 (DEDRFSRRGT), 983–992 (DDDRPSWRNA), 993–1002 (DDDRPPRRIG), 1003–1012 (DDDRGSWRHT), 1013–1022 (DDDRPPRRGL), 1023–1032 (DDERGSWRTA), 1033–1042 (DEDRGPRRGM), 1043–1052 (DDDRGPRRGG), 1054–1063 (DDERSSWRNA), 1064–1073 (DDDRGPRRGM), 1074–1083 (DDDRGPRRGL), 1084–1093 (DDDRGPWRNA), 1094–1103 (AEDRISRRGA), 1104–1113 (DDDRGPWRNM), and 1114–1123 (DDDRVPRRGD). S1028 carries the phosphoserine modification. The stretch at 1124–1133 (DARPGPWRPF) is one 21; approximate repeat. S1149, S1159, and S1223 each carry phosphoserine. Phosphoserine occurs at positions 1300 and 1326.

This sequence belongs to the eIF-3 subunit A family. In terms of assembly, interacts with KRT7. Component of the eukaryotic translation initiation factor 3 (eIF-3) complex, which is composed of 13 subunits: EIF3A, EIF3B, EIF3C, EIF3D, EIF3E, EIF3F, EIF3G, EIF3H, EIF3I, EIF3J, EIF3K, EIF3L and EIF3M. The eIF-3 complex appears to include 3 stable modules: module A is composed of EIF3A, EIF3B, EIF3G and EIF3I; module B is composed of EIF3F, EIF3H, and EIF3M; and module C is composed of EIF3C, EIF3D, EIF3E, EIF3L and EIF3K. EIF3C of module C binds EIF3B of module A and EIF3H of module B, thereby linking the three modules. EIF3J is a labile subunit that binds to the eIF-3 complex via EIF3B. The eIF-3 complex may interact with RPS6KB1 under conditions of nutrient depletion. Mitogenic stimulation may lead to binding and activation of a complex composed of MTOR and RPTOR, leading to phosphorylation and release of RPS6KB1 and binding of EIF4B to eIF-3. Interacts with EIF4G1 and PIWIL2. Phosphorylated. Phosphorylation is enhanced upon serum stimulation.

The protein resides in the cytoplasm. It localises to the cytoskeleton. It is found in the microtubule organizing center. The protein localises to the centrosome. Its subcellular location is the nucleus. Its function is as follows. RNA-binding component of the eukaryotic translation initiation factor 3 (eIF-3) complex, which is required for several steps in the initiation of protein synthesis. The eIF-3 complex associates with the 40S ribosome and facilitates the recruitment of eIF-1, eIF-1A, eIF-2:GTP:methionyl-tRNAi and eIF-5 to form the 43S pre-initiation complex (43S PIC). The eIF-3 complex stimulates mRNA recruitment to the 43S PIC and scanning of the mRNA for AUG recognition. The eIF-3 complex is also required for disassembly and recycling of post-termination ribosomal complexes and subsequently prevents premature joining of the 40S and 60S ribosomal subunits prior to initiation. The eIF-3 complex specifically targets and initiates translation of a subset of mRNAs involved in cell proliferation, including cell cycling, differentiation and apoptosis, and uses different modes of RNA stem-loop binding to exert either translational activation or repression. The protein is Eukaryotic translation initiation factor 3 subunit A (Eif3a) of Mus musculus (Mouse).